The sequence spans 346 residues: Uroporphyrinogen decarboxylase (346 aa).

Substrate contacts are provided by residues 23–27 (RQAGR), D73, Y151, S206, and H321.

This sequence belongs to the uroporphyrinogen decarboxylase family. In terms of assembly, homodimer.

It localises to the cytoplasm. It catalyses the reaction uroporphyrinogen III + 4 H(+) = coproporphyrinogen III + 4 CO2. It participates in porphyrin-containing compound metabolism; protoporphyrin-IX biosynthesis; coproporphyrinogen-III from 5-aminolevulinate: step 4/4. Catalyzes the decarboxylation of four acetate groups of uroporphyrinogen-III to yield coproporphyrinogen-III. This Aliarcobacter butzleri (strain RM4018) (Arcobacter butzleri) protein is Uroporphyrinogen decarboxylase.